A 195-amino-acid polypeptide reads, in one-letter code: dCTP deaminase (195 aa).

DCTP contacts are provided by residues 110–115 (RSSLAR), Asp128, 136–138 (VLE), Tyr171, Lys178, and Gln182. Catalysis depends on Glu138, which acts as the Proton donor/acceptor. The segment covering 169 to 179 (RPYSSRKDAKY) has biased composition (basic and acidic residues). The tract at residues 169–195 (RPYSSRKDAKYKNQQSAVASRIDEDKE) is disordered.

Belongs to the dCTP deaminase family. Homotrimer.

It catalyses the reaction dCTP + H2O + H(+) = dUTP + NH4(+). Its pathway is pyrimidine metabolism; dUMP biosynthesis; dUMP from dCTP (dUTP route): step 1/2. Its function is as follows. Catalyzes the deamination of dCTP to dUTP. This Haemophilus influenzae (strain 86-028NP) protein is dCTP deaminase.